The primary structure comprises 187 residues: DNA-directed RNA polymerase subunit Rpo7 (187 aa).

The S1 motif domain maps to Y82–R166.

It belongs to the eukaryotic RPB7/RPC8 RNA polymerase subunit family. In terms of assembly, part of the RNA polymerase complex. Forms a stalk with Rpo4 that extends from the main structure.

It localises to the cytoplasm. It carries out the reaction RNA(n) + a ribonucleoside 5'-triphosphate = RNA(n+1) + diphosphate. DNA-dependent RNA polymerase (RNAP) catalyzes the transcription of DNA into RNA using the four ribonucleoside triphosphates as substrates. The chain is DNA-directed RNA polymerase subunit Rpo7 from Methanocaldococcus jannaschii (strain ATCC 43067 / DSM 2661 / JAL-1 / JCM 10045 / NBRC 100440) (Methanococcus jannaschii).